Reading from the N-terminus, the 312-residue chain is Chorismate mutase 1, chloroplastic (312 aa).

The N-terminal 44 residues, 1–44 (MAFKLATKAAAASPAAAHRGGLARGPEGTSRVAFGPAPRNKGLR), are a transit peptide targeting the chloroplast. A disordered region spans residues 16 to 58 (AAHRGGLARGPEGTSRVAFGPAPRNKGLRAANNSATPVAKEER). L-phenylalanine-binding positions include arginine 58 and 190–193 (NAGS). L-tyrosine is bound by residues arginine 58 and 190–193 (NAGS). In terms of domain architecture, Chorismate mutase spans 58 to 312 (RVDRSEILTL…QIAYLLRRLD (255 aa)).

In terms of assembly, homodimer. Interacts with Cmu1 of the fungal pathogen Ustilago maydis.

It localises to the plastid. It is found in the chloroplast. The enzyme catalyses chorismate = prephenate. The protein operates within metabolic intermediate biosynthesis; prephenate biosynthesis; prephenate from chorismate: step 1/1. Allosterically inhibited by tyrosine and phenylalanine. Activated by tryptophan. Its function is as follows. May play a role in chloroplast biogenesis. In Zea mays (Maize), this protein is Chorismate mutase 1, chloroplastic.